The sequence spans 346 residues: Acetylserotonin O-methyltransferase (346 aa).

Residues Tyr148, Trp165, Asp211, 236-238 (GDF), and Lys253 contribute to the S-adenosyl-L-methionine site. The active-site Proton donor/acceptor is His256. Substrate-binding residues include Asp257, Asn303, and Gln307.

It belongs to the class I-like SAM-binding methyltransferase superfamily. Cation-independent O-methyltransferase family. As to quaternary structure, homodimer. In terms of tissue distribution, expressed in pineal gland and retina.

The enzyme catalyses N-acetylserotonin + S-adenosyl-L-methionine = melatonin + S-adenosyl-L-homocysteine + H(+). The protein operates within aromatic compound metabolism; melatonin biosynthesis; melatonin from serotonin: step 1/2. Its function is as follows. Catalyzes the transfer of a methyl group onto N-acetylserotonin, producing melatonin (N-acetyl-5-methoxytryptamine). The sequence is that of Acetylserotonin O-methyltransferase (ASMT) from Gallus gallus (Chicken).